A 366-amino-acid chain; its full sequence is Mitogen-activated protein kinase CPK1 (366 aa).

The Protein kinase domain occupies 17-302 (KLEEIVGEGA…SPSKRITVEE (286 aa)). ATP contacts are provided by residues 22–30 (VGEGAYGLV) and K45. Residue D140 is the Proton acceptor of the active site. T181 carries the post-translational modification Phosphothreonine. Positions 181 to 183 (TEY) match the TXY motif. Y183 carries the phosphotyrosine modification.

The protein belongs to the protein kinase superfamily. CMGC Ser/Thr protein kinase family. MAP kinase subfamily. Requires Mg(2+) as cofactor. Dually phosphorylated on Thr-181 and Tyr-183, which activates the enzyme.

The enzyme catalyses L-seryl-[protein] + ATP = O-phospho-L-seryl-[protein] + ADP + H(+). It carries out the reaction L-threonyl-[protein] + ATP = O-phospho-L-threonyl-[protein] + ADP + H(+). With respect to regulation, activated by tyrosine and threonine phosphorylation. In terms of biological role, responds to activation by environmental stress by phosphorylating downstream targets. The sequence is that of Mitogen-activated protein kinase CPK1 (CPK1) from Cryptococcus neoformans var. neoformans serotype D (strain B-3501A) (Filobasidiella neoformans).